The following is a 197-amino-acid chain: MMEKEYEYLVPPDDYLAAGVHIGTQIKTGDMKKFIFKVRQDGLYVLDIRKLDERIRVAAKFLSRYEPSKILLVAARQYAHKPVQMFSKVVGSDYIVGRFIPGTLTNPMLSEYREPEVVFVNDPAIDKQAVSEATAVGIPVVALCDSNNSSADVDLVIPTNNKGRRALAIVYWLLAREIAKIRGQDFTYSIEDFEAEL.

This sequence belongs to the universal ribosomal protein uS2 family.

The chain is Small ribosomal subunit protein uS2 (rps2) from Archaeoglobus fulgidus (strain ATCC 49558 / DSM 4304 / JCM 9628 / NBRC 100126 / VC-16).